The chain runs to 192 residues: Fe/S biogenesis protein NfuA (192 aa).

Residues Cys149 and Cys152 each coordinate [4Fe-4S] cluster.

This sequence belongs to the NfuA family. As to quaternary structure, homodimer. [4Fe-4S] cluster is required as a cofactor.

In terms of biological role, involved in iron-sulfur cluster biogenesis. Binds a 4Fe-4S cluster, can transfer this cluster to apoproteins, and thereby intervenes in the maturation of Fe/S proteins. Could also act as a scaffold/chaperone for damaged Fe/S proteins. The chain is Fe/S biogenesis protein NfuA from Shewanella loihica (strain ATCC BAA-1088 / PV-4).